Consider the following 679-residue polypeptide: DNA ligase (679 aa).

NAD(+) is bound by residues 36 to 40 (DEYYD) and 94 to 95 (SL). Residue lysine 126 is the N6-AMP-lysine intermediate of the active site. The NAD(+) site is built by arginine 147, glutamate 181, lysine 299, and lysine 323. Zn(2+) contacts are provided by cysteine 415, cysteine 418, cysteine 433, and cysteine 438. Residues 603–679 (IQSTKLENKT…DEEFLKKMLE (77 aa)) form the BRCT domain.

It belongs to the NAD-dependent DNA ligase family. LigA subfamily. Mg(2+) is required as a cofactor. Requires Mn(2+) as cofactor.

The enzyme catalyses NAD(+) + (deoxyribonucleotide)n-3'-hydroxyl + 5'-phospho-(deoxyribonucleotide)m = (deoxyribonucleotide)n+m + AMP + beta-nicotinamide D-nucleotide.. Functionally, DNA ligase that catalyzes the formation of phosphodiester linkages between 5'-phosphoryl and 3'-hydroxyl groups in double-stranded DNA using NAD as a coenzyme and as the energy source for the reaction. It is essential for DNA replication and repair of damaged DNA. This chain is DNA ligase, found in Mycoplasmopsis pulmonis (strain UAB CTIP) (Mycoplasma pulmonis).